The sequence spans 693 residues: Probable L-type lectin-domain containing receptor kinase VI.1 (693 aa).

A signal peptide spans 1 to 22; sequence MGIARSINSFMFFFFLMILSNA. N-linked (GlcNAc...) asparagine glycans are attached at residues Asn21, Asn44, Asn71, Asn89, Asn141, Asn180, and Asn223. Residues 23–311 lie on the Extracellular side of the membrane; sequence SKSSVLAEAT…SNKKGYNSQV (289 aa). A legume-lectin like region spans residues 33 to 279; sequence TAKFTFIGFK…AHYVMGWSFS (247 aa). The helical transmembrane segment at 312–332 threads the bilayer; it reads IVLIVALSIVTLVLLVLLFIF. Over 333-693 the chain is Cytoplasmic; sequence VMYKRRIQEE…VSSSSIVSGR (361 aa). In terms of domain architecture, Protein kinase spans 368–642; that stretch reads FKESEIIGTG…LRYLNGEENV (275 aa). ATP-binding positions include 374–382 and Lys396; that span reads IGTGGFGIV. Asp495 serves as the catalytic Proton acceptor. The disordered stretch occupies residues 670 to 693; that stretch reads DRASSSNTFSSFSNVSSSSIVSGR.

The protein in the C-terminal section; belongs to the protein kinase superfamily. Ser/Thr protein kinase family. In the N-terminal section; belongs to the leguminous lectin family.

The protein resides in the cell membrane. The catalysed reaction is L-seryl-[protein] + ATP = O-phospho-L-seryl-[protein] + ADP + H(+). It catalyses the reaction L-threonyl-[protein] + ATP = O-phospho-L-threonyl-[protein] + ADP + H(+). This chain is Probable L-type lectin-domain containing receptor kinase VI.1 (LECRK61), found in Arabidopsis thaliana (Mouse-ear cress).